We begin with the raw amino-acid sequence, 213 residues long: Phosphoribosylformylglycinamidine synthase subunit PurQ (213 aa).

In terms of domain architecture, Glutamine amidotransferase type-1 spans 5–213; sequence ACVVVYPGSN…FQSILNYLKR (209 aa). The active-site Nucleophile is the Cys-86. Residues His-186 and Glu-188 contribute to the active site.

In terms of assembly, part of the FGAM synthase complex composed of 1 PurL, 1 PurQ and 2 PurS subunits.

It localises to the cytoplasm. The catalysed reaction is N(2)-formyl-N(1)-(5-phospho-beta-D-ribosyl)glycinamide + L-glutamine + ATP + H2O = 2-formamido-N(1)-(5-O-phospho-beta-D-ribosyl)acetamidine + L-glutamate + ADP + phosphate + H(+). It catalyses the reaction L-glutamine + H2O = L-glutamate + NH4(+). The protein operates within purine metabolism; IMP biosynthesis via de novo pathway; 5-amino-1-(5-phospho-D-ribosyl)imidazole from N(2)-formyl-N(1)-(5-phospho-D-ribosyl)glycinamide: step 1/2. In terms of biological role, part of the phosphoribosylformylglycinamidine synthase complex involved in the purines biosynthetic pathway. Catalyzes the ATP-dependent conversion of formylglycinamide ribonucleotide (FGAR) and glutamine to yield formylglycinamidine ribonucleotide (FGAM) and glutamate. The FGAM synthase complex is composed of three subunits. PurQ produces an ammonia molecule by converting glutamine to glutamate. PurL transfers the ammonia molecule to FGAR to form FGAM in an ATP-dependent manner. PurS interacts with PurQ and PurL and is thought to assist in the transfer of the ammonia molecule from PurQ to PurL. This is Phosphoribosylformylglycinamidine synthase subunit PurQ from Thermotoga maritima (strain ATCC 43589 / DSM 3109 / JCM 10099 / NBRC 100826 / MSB8).